A 479-amino-acid polypeptide reads, in one-letter code: Deoxyribodipyrimidine photo-lyase (479 aa).

The Photolyase/cryptochrome alpha/beta domain maps to 6–132; it reads APVIVWFRKD…TVRSFSGQLL (127 aa). An FAD-binding site is contributed by Tyr226. Arg230 contacts DNA. FAD-binding positions include 238–242 and 277–284; these read TSLLS and EIVWREFC. Interaction with DNA regions lie at residues 277–284 and 343–344; these read EIVWREFC and NR. Residue 374-376 participates in FAD binding; that stretch reads DAD. DNA is bound at residue Gln406.

This sequence belongs to the DNA photolyase class-3 family. It depends on FAD as a cofactor. Requires (6R)-5,10-methylene-5,6,7,8-tetrahydrofolate as cofactor.

It carries out the reaction cyclobutadipyrimidine (in DNA) = 2 pyrimidine residues (in DNA).. In terms of biological role, photolyase involved in the repair of UV radiation-induced DNA damage. By using blue-light energy, catalyzes the photoreactivation of cyclobutane pyrimidine dimers (CPDs), which are formed between adjacent bases on the same DNA strand upon exposure to ultraviolet radiation. Can repair CPD lesions in ssDNA as well as in dsDNA. In Agrobacterium fabrum (strain C58 / ATCC 33970) (Agrobacterium tumefaciens (strain C58)), this protein is Deoxyribodipyrimidine photo-lyase.